A 120-amino-acid chain; its full sequence is NAD(P)H-quinone oxidoreductase subunit 3, chloroplastic (120 aa).

3 helical membrane-spanning segments follow: residues 7–27 (YQTF…ALLI), 64–84 (SFAL…PWAM), and 89–109 (LGIF…IGLV).

Belongs to the complex I subunit 3 family. In terms of assembly, NDH is composed of at least 16 different subunits, 5 of which are encoded in the nucleus.

It localises to the plastid. The protein localises to the chloroplast thylakoid membrane. It carries out the reaction a plastoquinone + NADH + (n+1) H(+)(in) = a plastoquinol + NAD(+) + n H(+)(out). It catalyses the reaction a plastoquinone + NADPH + (n+1) H(+)(in) = a plastoquinol + NADP(+) + n H(+)(out). In terms of biological role, NDH shuttles electrons from NAD(P)H:plastoquinone, via FMN and iron-sulfur (Fe-S) centers, to quinones in the photosynthetic chain and possibly in a chloroplast respiratory chain. The immediate electron acceptor for the enzyme in this species is believed to be plastoquinone. Couples the redox reaction to proton translocation, and thus conserves the redox energy in a proton gradient. The sequence is that of NAD(P)H-quinone oxidoreductase subunit 3, chloroplastic from Psilotum nudum (Whisk fern).